A 215-amino-acid polypeptide reads, in one-letter code: MSKLRKITSLIFLTIIMVGCSSIPEQPTSVEWQSHQNRLLQIENYQASGKLAYISPEQRQSLNFIWKHSPNQSQLRLTTFLGQTALNLTIDSLGAKVVTYDDQVFTHASASVLVEQLTGLQIPIDHLPQWFLGIPDQADSYQLNSTNTLESLSKQVSSQLWTLNFANYRNTEMQSKQLSDKDNVKVETIPLPTRLSFKQDENKINIVVSKWTLKK.

Residues 1–19 (MSKLRKITSLIFLTIIMVG) form the signal peptide. The N-palmitoyl cysteine moiety is linked to residue cysteine 20. Cysteine 20 is lipidated: S-diacylglycerol cysteine.

Belongs to the LolB family. In terms of assembly, monomer.

The protein resides in the cell outer membrane. Its function is as follows. Plays a critical role in the incorporation of lipoproteins in the outer membrane after they are released by the LolA protein. The chain is Outer-membrane lipoprotein LolB from Vibrio atlanticus (strain LGP32) (Vibrio splendidus (strain Mel32)).